Reading from the N-terminus, the 260-residue chain is Cytochrome c oxidase subunit 3 (260 aa).

A run of 6 helical transmembrane segments spans residues 30–50 (LILWFHINSTILFILGTVLLV), 81–101 (GMILFITSEVCLFFAFFWAFF), 126–146 (FLVPLLNTAVLLSSGVTVTWA), 158–178 (AIQSLTLTVFLGVYFTILQAW), 196–216 (FFVATGFHGLHVLIGTAFLAV), and 239–259 (WYWHFVDVVWLFLYICIYWWG).

It belongs to the cytochrome c oxidase subunit 3 family. In terms of assembly, component of the cytochrome c oxidase (complex IV, CIV), a multisubunit enzyme composed of a catalytic core of 3 subunits and several supernumerary subunits. The complex exists as a monomer or a dimer and forms supercomplexes (SCs) in the inner mitochondrial membrane with ubiquinol-cytochrome c oxidoreductase (cytochrome b-c1 complex, complex III, CIII).

The protein resides in the mitochondrion inner membrane. It carries out the reaction 4 Fe(II)-[cytochrome c] + O2 + 8 H(+)(in) = 4 Fe(III)-[cytochrome c] + 2 H2O + 4 H(+)(out). Functionally, component of the cytochrome c oxidase, the last enzyme in the mitochondrial electron transport chain which drives oxidative phosphorylation. The respiratory chain contains 3 multisubunit complexes succinate dehydrogenase (complex II, CII), ubiquinol-cytochrome c oxidoreductase (cytochrome b-c1 complex, complex III, CIII) and cytochrome c oxidase (complex IV, CIV), that cooperate to transfer electrons derived from NADH and succinate to molecular oxygen, creating an electrochemical gradient over the inner membrane that drives transmembrane transport and the ATP synthase. Cytochrome c oxidase is the component of the respiratory chain that catalyzes the reduction of oxygen to water. Electrons originating from reduced cytochrome c in the intermembrane space (IMS) are transferred via the dinuclear copper A center (CU(A)) of subunit 2 and heme A of subunit 1 to the active site in subunit 1, a binuclear center (BNC) formed by heme A3 and copper B (CU(B)). The BNC reduces molecular oxygen to 2 water molecules using 4 electrons from cytochrome c in the IMS and 4 protons from the mitochondrial matrix. The chain is Cytochrome c oxidase subunit 3 (COIII) from Pisaster ochraceus (Ochre sea star).